We begin with the raw amino-acid sequence, 660 residues long: Chaperone protein DnaK (660 aa).

Thr201 carries the phosphothreonine; by autocatalysis modification. Residues 599–660 are disordered; sequence EAMQAQSASA…ADVEIVDKPE (62 aa). Residues 600-617 are compositionally biased toward low complexity; that stretch reads AMQAQSASAAASSAANAQ.

The protein belongs to the heat shock protein 70 family.

Its function is as follows. Acts as a chaperone. This Chlamydia trachomatis serovar A (strain ATCC VR-571B / DSM 19440 / HAR-13) protein is Chaperone protein DnaK.